The chain runs to 839 residues: Homeobox-leucine zipper protein HOX10 (839 aa).

Disordered stretches follow at residues 1–24 and 132–157; these read MAAAVAMRGSSSDGGGYDKVSGMD and QNTPLANDTSCESNVTTPQNPLRDAS. Residues 24-87 constitute a DNA-binding region (homeobox); it reads DSGKYVRYTP…NRRCRDKQRK (64 aa). Residues 91-134 are a coiled coil; sequence RLQAVNRKLTAMNKLLMEENERLQKQVSQLVHENAHMRQQLQNT. The region spanning 155–383 is the START domain; sequence DASNPSGLLS…IAQETSGEVV (229 aa).

It belongs to the HD-ZIP homeobox family. Class III subfamily. Expressed in stems, leaf sheaths and blades and panicles.

Its subcellular location is the nucleus. Its function is as follows. Probable transcription factor. This chain is Homeobox-leucine zipper protein HOX10 (HOX10), found in Oryza sativa subsp. indica (Rice).